The primary structure comprises 456 residues: Ribosome assembly protein METTL17, mitochondrial (456 aa).

Residues 1–19 (MAAALKCLLTLGRWCPGLG) constitute a mitochondrion transit peptide. Residues Cys333, Cys339, Cys347, and Cys404 each coordinate [4Fe-4S] cluster.

The protein belongs to the methyltransferase superfamily. Rsm22 family. As to quaternary structure, associates with the mitochondrial ribosome (mitoribosome).

It is found in the mitochondrion matrix. In terms of biological role, mitochondrial ribosome (mitoribosome) assembly factor. Binds at the interface of the head and body domains of the mitochondrial small ribosomal subunit (mt-SSU), occluding the mRNA channel and preventing compaction of the head domain towards the body. Probable inactive methyltransferase: retains the characteristic folding and ability to bind S-adenosyl-L-methionine, but it probably lost its methyltransferase activity. The chain is Ribosome assembly protein METTL17, mitochondrial from Homo sapiens (Human).